A 782-amino-acid polypeptide reads, in one-letter code: MKISSGAINFSTIPNQVKKLITSIREHTKNGFASKITSVKNTHASLNEKIKTGKSSSIEFALPQKIKDFFQPKDKNTLNKTLITVKNIKDTNNAGKINISAEDVSKMNAAFMRKHIANQSRDYNYRVTGAAPLPGGVSVSANNRPTVSEGRTPPVSPSLSLQATSFPSSPADWAKKLTDAVLRQKAGETLTAADRDFSNADFRNITFSKILPPSFMERDGDIIKGFNFSNSKFTYSDISHLHFDECRFTYSTLSDVVCSNTKFSNSDMNEVFLQYSITTQQQPSFIDTTLKNTLIRHKANLSGVILHEPDNSSPPSVSRGGNFIRLGDIWLQMPLLWTENAVDGFLNHEHNNGKSILMTIDSLPDKYSQEKVRAMEDLVKSLRGGRLTEAGIRPVESSLVSVLAHPPYTQSALISEWIRPVQERFFAHQCQTYNDVPLPAPDTYYQQRILPVLLDSFDRNSAAMTTHSGLFNQVILHCMTGVDCTDGTRQKAAALYEQYLAHPAVSPHIHNGLFGNYDGSPDWTTRAADNFLLLSSQDSDTAMMLSTNTLLTMLNPTPDTAWDNFYLLRAGENVSTAQISPVELFRHDFPVFLAAFNQQATQRRFGELIDIILSTEEHGELNQQFIAATNQKHSTVKLIDDASVSRLNTIFDPLLPEGKLSPAHYQHILSAYHLTDATPQKQAETLFCLSTAFARYSSSAIFGTEHDSPPALRGYAEALMQKAWELSPAIFPSSEQFTDWSDRFHGLHGAFTCTSVVADSMQRHARKYFPSVLSSILPLAWA.

Catalysis depends on Cys-753, which acts as the Glycyl thioester intermediate.

It belongs to the SopA E3 ligase family. Post-translationally, ubiquitinated in the presence of host E1 ubiquitin-activating enzyme, E2 ubiquitin-conjugating enzyme and ubiquitin.

The protein resides in the secreted. Its subcellular location is the host cell. It carries out the reaction S-ubiquitinyl-[E2 ubiquitin-conjugating enzyme]-L-cysteine + [acceptor protein]-L-lysine = [E2 ubiquitin-conjugating enzyme]-L-cysteine + N(6)-ubiquitinyl-[acceptor protein]-L-lysine.. Effector proteins function to alter host cell physiology and promote bacterial survival in host tissues. This protein is an E3 ubiquitin ligase that interferes with host's ubiquitination pathway. The sequence is that of E3 ubiquitin-protein ligase SopA (sopA) from Salmonella choleraesuis (strain SC-B67).